The sequence spans 285 residues: NAC domain-containing protein 92 (285 aa).

Positions 20–170 (LPPGFRFHPT…EWVICRVFQK (151 aa)) constitute an NAC domain. The DNA-binding element occupies 117–176 (VGMKKTLVFYKGRAPKGVKTNWVMHEYRLEGKYCIENLPQTAKNEWVICRVFQKRADGTK).

As to quaternary structure, forms homodimers. Interacts with GLK1 and GLK2. Interacts with NLA. In terms of processing, ubiquitinated by NLA. Ubiquitination of NAC92 leads to its degradation by the proteasome during leaf senescence under nitrogen deficiency. Mostly expressed in roots and flowers, and, to a lower extent, in shoots and leaves. Particularly expressed in old and senescing tissues.

The protein resides in the nucleus. Functionally, transcription activator that binds to DNA in promoters of target genes on a specific bipartite motif 5'-[ACG][CA]GT[AG](5-6n)[CT]AC[AG]-3'. Promotes lateral root development. Triggers the expression of senescence-associated genes during age-, salt- and dark-induced senescence through a regulatory network that may involve cross-talk with salt- and H(2)O(2)-dependent signaling pathways. Also regulates genes during seed germination. Positively regulates aging-induced cell death. Involved in age-related resistance (ARR) against Pseudomonas syringae pv. tomato and Hyaloperonospora arabidopsidis. Antagonizes GLK1 and GLK2 transcriptional activity, shifting the balance from chloroplast maintenance towards deterioration during leaf senescence. Promotes the expression of senescence-associated genes, including ENDO1/BFN1, SWEET15/SAG29 and SINA1/At3g13672, during senescence onset. The sequence is that of NAC domain-containing protein 92 from Arabidopsis thaliana (Mouse-ear cress).